The primary structure comprises 706 residues: Polyribonucleotide nucleotidyltransferase (706 aa).

D488 and D494 together coordinate Mg(2+). A KH domain is found at 555–614 (PRLFTMKINPDKIRDVIGKGGSVIRALTEETGTQINIDEDGTITIASADPAKAEEAKRRI). In terms of domain architecture, S1 motif spans 624–692 (GKIYEGPITK…EKGRIKLSMK (69 aa)).

This sequence belongs to the polyribonucleotide nucleotidyltransferase family. Mg(2+) is required as a cofactor.

Its subcellular location is the cytoplasm. The catalysed reaction is RNA(n+1) + phosphate = RNA(n) + a ribonucleoside 5'-diphosphate. In terms of biological role, involved in mRNA degradation. Catalyzes the phosphorolysis of single-stranded polyribonucleotides processively in the 3'- to 5'-direction. The sequence is that of Polyribonucleotide nucleotidyltransferase from Albidiferax ferrireducens (strain ATCC BAA-621 / DSM 15236 / T118) (Rhodoferax ferrireducens).